We begin with the raw amino-acid sequence, 65 residues long: Ringhalexin (65 aa).

Disulfide bonds link cysteine 3-cysteine 24, cysteine 17-cysteine 42, cysteine 46-cysteine 57, and cysteine 58-cysteine 63.

As to expression, expressed by the venom gland.

The protein localises to the secreted. In terms of biological role, has anticoagulant activity, since it is able to inhibit the activation of coagulation factor X (F10) by coagulation factor VIIa (F7) (IC(50)=123.8 nM). Also shows weak irreversible neurotoxicity. The polypeptide is Ringhalexin (Hemachatus haemachatus (Rinkhals)).